The chain runs to 248 residues: 4-hydroxy-tetrahydrodipicolinate reductase (248 aa).

Residues 9-14, 77-79, and 104-107 contribute to the NAD(+) site; these read GAKGRV, GTT, and APNF. His134 functions as the Proton donor/acceptor in the catalytic mechanism. His135 is a binding site for (S)-2,3,4,5-tetrahydrodipicolinate. The active-site Proton donor is Lys138. 144–145 contacts (S)-2,3,4,5-tetrahydrodipicolinate; it reads GT.

It belongs to the DapB family.

The protein resides in the cytoplasm. It carries out the reaction (S)-2,3,4,5-tetrahydrodipicolinate + NAD(+) + H2O = (2S,4S)-4-hydroxy-2,3,4,5-tetrahydrodipicolinate + NADH + H(+). It catalyses the reaction (S)-2,3,4,5-tetrahydrodipicolinate + NADP(+) + H2O = (2S,4S)-4-hydroxy-2,3,4,5-tetrahydrodipicolinate + NADPH + H(+). The protein operates within amino-acid biosynthesis; L-lysine biosynthesis via DAP pathway; (S)-tetrahydrodipicolinate from L-aspartate: step 4/4. Its function is as follows. Catalyzes the conversion of 4-hydroxy-tetrahydrodipicolinate (HTPA) to tetrahydrodipicolinate. In Corynebacterium glutamicum (strain ATCC 13032 / DSM 20300 / JCM 1318 / BCRC 11384 / CCUG 27702 / LMG 3730 / NBRC 12168 / NCIMB 10025 / NRRL B-2784 / 534), this protein is 4-hydroxy-tetrahydrodipicolinate reductase.